Here is a 1116-residue protein sequence, read N- to C-terminus: Angiopoietin-1 receptor (1116 aa).

An N-terminal signal peptide occupies residues 1 to 21 (MCLLDSCTALLLLGCWMSGSA). Residues 22–745 (VRISDVTLVN…FAAHGHLLLY (724 aa)) are Extracellular-facing. An intrachain disulfide couples Cys46 to Cys106. In terms of domain architecture, Ig-like C2-type 1 spans 46–126 (CVSSDWSSGG…YTYKMLQEAA (81 aa)). Asn110, Asn143, and Asn223 each carry an N-linked (GlcNAc...) asparagine glycan. EGF-like domains follow at residues 214–256 (SCRA…HTCD), 258–302 (VCGE…LSCN), and 304–342 (ACPD…SRCE). Cystine bridges form between Cys215–Cys224, Cys228–Cys237, Cys231–Cys244, Cys246–Cys255, Cys259–Cys268, Cys272–Cys277, Cys283–Cys290, Cys292–Cys301, Cys305–Cys314, Cys318–Cys325, Cys320–Cys331, and Cys333–Cys341. The region spanning 348–438 (PVISHLRDVE…MQVEDEFTVE (91 aa)) is the Ig-like C2-type 2 domain. N-linked (GlcNAc...) asparagine glycans are attached at residues Asn367, Asn387, and Asn425. A disulfide bond links Cys368 and Cys422. Fibronectin type-III domains follow at residues 444–538 (RPQN…TQVL), 540–633 (LPVG…QLPP), and 634–729 (PPAN…TLPQ). N-linked (GlcNAc...) asparagine glycans are attached at residues Asn590, Asn637, and Asn642. Residues 746–766 (AILGSAGMTCCTVLLAFCIVL) traverse the membrane as a helical segment. At 767–1116 (QLKRNTLQRR…GIDCSAEEAG (350 aa)) the chain is on the cytoplasmic side. A Protein kinase domain is found at 816-1095 (IQFQDVLGEG…RMLEERKTYV (280 aa)). Residues 822-830 (LGEGNFGQV) and Lys847 each bind ATP. Tyr852 carries the post-translational modification Phosphotyrosine; by autocatalysis. Asp956 serves as the catalytic Proton acceptor. Phosphotyrosine; by autocatalysis is present on residues Tyr984, Tyr1094, and Tyr1100.

The protein belongs to the protein kinase superfamily. Tyr protein kinase family. Tie subfamily. As to quaternary structure, interacts with svep1. In terms of processing, autophosphorylated on tyrosine residues in response to ligand binding. Autophosphorylation occurs in trans, i.e. one subunit of the dimeric receptor phosphorylates tyrosine residues on the other subunit. Autophosphorylation occurs in a sequential manner, where Tyr-984 in the kinase activation loop is phosphorylated first, followed by autophosphorylation at additional tyrosine residues. Phosphorylation is important for interaction with scaffold proteins and effectors.

Its subcellular location is the cell membrane. It localises to the cell junction. The protein resides in the focal adhesion. It is found in the cytoplasm. The protein localises to the cytoskeleton. The enzyme catalyses L-tyrosyl-[protein] + ATP = O-phospho-L-tyrosyl-[protein] + ADP + H(+). Its activity is regulated as follows. Angiopoietin binding leads to receptor dimerization and activation by autophosphorylation at Tyr-984 on the kinase activation loop. Functionally, tyrosine-protein kinase that acts as a cell-surface receptor for angiopoietins and regulates angiogenesis, endothelial cell survival, proliferation, migration, adhesion and cell spreading, reorganization of the actin cytoskeleton, but also maintenance of vascular quiescence. Can activate or inhibit angiogenesis, depending on the context. Angiopoietin signaling triggers receptor dimerization and autophosphorylation at specific tyrosine residues that then serve as binding sites for scaffold proteins and effectors. This chain is Angiopoietin-1 receptor, found in Danio rerio (Zebrafish).